Consider the following 90-residue polypeptide: Small ribosomal subunit protein bS16 (90 aa).

The protein belongs to the bacterial ribosomal protein bS16 family.

This chain is Small ribosomal subunit protein bS16, found in Lactococcus lactis subsp. cremoris (strain MG1363).